The primary structure comprises 308 residues: MSTTLLQSDLPGLPLRHRGKVRDVFDLPRDRLPADAPPGDYLLMVATDRLSAFDVVLPDPIPGKGEMLCQVSNFWFHKTEHLMPNHLMDIRVEQVLPEGVDPALYAKRAVVTRKLKPVPVEAIARGYVIGSGWKDYQRTGKISGIELPDGLRQAEKLPEPIFTPSTKAAVGDHDENIDFDAMVKTVGAELAERVRDATLRIYRFAADFAAERGILLADTKFEFGTDADGRLYIMDEMLTPDSSRYWPADQYEPGTSPPSYDKQFVRDYLETLDWGKTAPGPRLPADVIDRTRAKYAEALQRLADISVD.

Belongs to the SAICAR synthetase family.

It catalyses the reaction 5-amino-1-(5-phospho-D-ribosyl)imidazole-4-carboxylate + L-aspartate + ATP = (2S)-2-[5-amino-1-(5-phospho-beta-D-ribosyl)imidazole-4-carboxamido]succinate + ADP + phosphate + 2 H(+). Its pathway is purine metabolism; IMP biosynthesis via de novo pathway; 5-amino-1-(5-phospho-D-ribosyl)imidazole-4-carboxamide from 5-amino-1-(5-phospho-D-ribosyl)imidazole-4-carboxylate: step 1/2. The polypeptide is Phosphoribosylaminoimidazole-succinocarboxamide synthase (Xanthomonas euvesicatoria pv. vesicatoria (strain 85-10) (Xanthomonas campestris pv. vesicatoria)).